We begin with the raw amino-acid sequence, 619 residues long: Protein Atg16l2 (619 aa).

The interval 57–78 (LQPEPNSVTPTTHQGPWEESEL) is disordered. Over residues 60-70 (EPNSVTPTTHQ) the composition is skewed to polar residues. Residues 116–227 (AALGTLESEL…QARVSQELKK (112 aa)) adopt a coiled-coil conformation. WD repeat units lie at residues 334-373 (AHLS…LEAN), 378-417 (GAGG…SKET), 420-454 (GHKD…LGRA), 455-498 (YCSR…CTQV), 500-539 (PVQG…IRQV), 546-585 (KCGS…LESR), and 589-619 (PHCA…VLWQ).

The protein belongs to the WD repeat ATG16 family. In terms of assembly, homooligomer. Heterooligomer with ATG16L1. Interacts with ATG5. Self-oligomerizes to form a 800-kDa complex composed of ATG12-ATG5 and ATG16L2. Interacts with RAB33B.

It localises to the cytoplasm. It is found in the cytosol. In terms of biological role, may play a role in regulating epithelial homeostasis in an ATG16L1-dependent manner. This chain is Protein Atg16l2 (ATG16L2), found in Homo sapiens (Human).